We begin with the raw amino-acid sequence, 122 residues long: Large ribosomal subunit protein bL17 (122 aa).

It belongs to the bacterial ribosomal protein bL17 family. In terms of assembly, part of the 50S ribosomal subunit. Contacts protein L32.

The sequence is that of Large ribosomal subunit protein bL17 from Staphylococcus aureus (strain Mu3 / ATCC 700698).